The primary structure comprises 469 residues: 2-amino-4-ketopentanoate thiolase beta subunit (469 aa).

K102 carries the post-translational modification N6-(pyridoxal phosphate)lysine. Residues N128 and 238–242 (AGGGN) contribute to the pyridoxal 5'-phosphate site.

This sequence belongs to the threonine synthase family. As to quaternary structure, heterodimer with OrtA. Requires pyridoxal 5'-phosphate as cofactor.

It carries out the reaction D-alanine + acetyl-CoA = (2R)-2-amino-4-oxopentanoate + CoA. Its activity is regulated as follows. Completely inhibited by p-chloromercuribenzoate (p-ClHgBzO) and acetyl-CoA, and partially inhibited by N-ethylmaleimide. Its function is as follows. Involved in the ornithine fermentation pathway. Catalyzes the thiolytic cleavage of 2-amino-4-ketopentanoate (AKP) with coenzyme A (CoA) to form acetyl-CoA and alanine. It is strictly specific for AKP. This chain is 2-amino-4-ketopentanoate thiolase beta subunit, found in Acetoanaerobium sticklandii (strain ATCC 12662 / DSM 519 / JCM 1433 / CCUG 9281 / NCIMB 10654 / HF) (Clostridium sticklandii).